Consider the following 209-residue polypeptide: Thiamine-phosphate synthase (209 aa).

4-amino-2-methyl-5-(diphosphooxymethyl)pyrimidine contacts are provided by residues 35-39 (QLRNK) and Asn-67. Positions 68 and 87 each coordinate Mg(2+). Residue Ser-106 coordinates 4-amino-2-methyl-5-(diphosphooxymethyl)pyrimidine. 132 to 134 (TGS) contacts 2-[(2R,5Z)-2-carboxy-4-methylthiazol-5(2H)-ylidene]ethyl phosphate. Residue Lys-135 coordinates 4-amino-2-methyl-5-(diphosphooxymethyl)pyrimidine. 2-[(2R,5Z)-2-carboxy-4-methylthiazol-5(2H)-ylidene]ethyl phosphate-binding positions include Gly-163 and 183–184 (IS).

The protein belongs to the thiamine-phosphate synthase family. The cofactor is Mg(2+).

It carries out the reaction 2-[(2R,5Z)-2-carboxy-4-methylthiazol-5(2H)-ylidene]ethyl phosphate + 4-amino-2-methyl-5-(diphosphooxymethyl)pyrimidine + 2 H(+) = thiamine phosphate + CO2 + diphosphate. The enzyme catalyses 2-(2-carboxy-4-methylthiazol-5-yl)ethyl phosphate + 4-amino-2-methyl-5-(diphosphooxymethyl)pyrimidine + 2 H(+) = thiamine phosphate + CO2 + diphosphate. It catalyses the reaction 4-methyl-5-(2-phosphooxyethyl)-thiazole + 4-amino-2-methyl-5-(diphosphooxymethyl)pyrimidine + H(+) = thiamine phosphate + diphosphate. The protein operates within cofactor biosynthesis; thiamine diphosphate biosynthesis; thiamine phosphate from 4-amino-2-methyl-5-diphosphomethylpyrimidine and 4-methyl-5-(2-phosphoethyl)-thiazole: step 1/1. In terms of biological role, condenses 4-methyl-5-(beta-hydroxyethyl)thiazole monophosphate (THZ-P) and 2-methyl-4-amino-5-hydroxymethyl pyrimidine pyrophosphate (HMP-PP) to form thiamine monophosphate (TMP). The polypeptide is Thiamine-phosphate synthase (Chlorobium phaeovibrioides (strain DSM 265 / 1930) (Prosthecochloris vibrioformis (strain DSM 265))).